The following is a 505-amino-acid chain: Surface lipoprotein assembly modifier 2 (505 aa).

The signal sequence occupies residues 1 to 19 (MLYFRYGFLVVWCAAGVSA). An N-terminal domain region spans residues 23 to 188 (ADAPAILDDK…RFRKKTEGLT (166 aa)). Residues 189–505 (GWRFSGGISP…EVFVSADWRF (317 aa)) form a C-terminal probable beta barrel region. 14 beta stranded membrane passes run 190–200 (WRFSGGISPAV), 232–243 (LNYEIEAEKLTP), 248–258 (HYLLFRSNIGG), 273–283 (FGRAYLGWQYK), 287–297 (QTAGILPFYQV), 326–335 (VGVQLSHTYR), 340–350 (WQFSVALEHYR), 368–377 (GFYVSSAKRL), 381–391 (ATVFGGWQFVR), 411–420 (NGVYAGWAQE), 427–437 (LNSRVSASYAR), 456–465 (WNVSLALSHD), 472–482 (IVPALNYRFGR), and 495–505 (SEVFVSADWRF).

Belongs to the Slam family.

It is found in the cell outer membrane. Functionally, required for correct export to the cell surface of cell outer membrane lipoprotein HpuA heterologously in E.coli (hpuA does not exist in N.meningitidis strain MC58). The chain is Surface lipoprotein assembly modifier 2 from Neisseria meningitidis serogroup B (strain ATCC BAA-335 / MC58).